The following is a 364-amino-acid chain: Spermidine/putrescine import ATP-binding protein PotA (364 aa).

In terms of domain architecture, ABC transporter spans 5-235 (LSFKSVSKQY…PVNRFVADFI (231 aa)). 37–44 (GPSGCGKT) contributes to the ATP binding site.

It belongs to the ABC transporter superfamily. Spermidine/putrescine importer (TC 3.A.1.11.1) family. The complex is composed of two ATP-binding proteins (PotA), two transmembrane proteins (PotB and PotC) and a solute-binding protein (PotD).

It is found in the cell membrane. It carries out the reaction ATP + H2O + polyamine-[polyamine-binding protein]Side 1 = ADP + phosphate + polyamineSide 2 + [polyamine-binding protein]Side 1.. Part of the ABC transporter complex PotABCD involved in spermidine/putrescine import. Responsible for energy coupling to the transport system. This Staphylococcus saprophyticus subsp. saprophyticus (strain ATCC 15305 / DSM 20229 / NCIMB 8711 / NCTC 7292 / S-41) protein is Spermidine/putrescine import ATP-binding protein PotA.